A 35-amino-acid polypeptide reads, in one-letter code: Augerpeptide hheTx5 (35 aa).

In terms of processing, contains 4 disulfide bonds. As to expression, expressed by the venom duct.

Its subcellular location is the secreted. In Hastula hectica (Sea snail), this protein is Augerpeptide hheTx5.